The sequence spans 310 residues: N-acetyl-gamma-glutamyl-phosphate reductase (310 aa).

Residue C117 is part of the active site.

The protein belongs to the NAGSA dehydrogenase family. Type 2 subfamily.

The protein localises to the cytoplasm. It catalyses the reaction N-acetyl-L-glutamate 5-semialdehyde + phosphate + NADP(+) = N-acetyl-L-glutamyl 5-phosphate + NADPH + H(+). It participates in amino-acid biosynthesis; L-arginine biosynthesis; N(2)-acetyl-L-ornithine from L-glutamate: step 3/4. Functionally, catalyzes the NADPH-dependent reduction of N-acetyl-5-glutamyl phosphate to yield N-acetyl-L-glutamate 5-semialdehyde. The polypeptide is N-acetyl-gamma-glutamyl-phosphate reductase (Rhizobium johnstonii (strain DSM 114642 / LMG 32736 / 3841) (Rhizobium leguminosarum bv. viciae)).